We begin with the raw amino-acid sequence, 304 residues long: Arginine-binding protein ArgT (304 aa).

The first 26 residues, 1–26 (MRFPKIPKRAVAATVGIVATSFTLAS), serve as a signal peptide directing secretion. A lipid anchor (N-palmitoyl cysteine) is attached at cysteine 27. Cysteine 27 carries the S-diacylglycerol cysteine lipid modification.

This sequence belongs to the bacterial solute-binding protein 3 family. In terms of assembly, the complex is probably composed of two ATP-binding proteins (ArgV), two transmembrane proteins (ArgU) and a solute-binding protein (ArgT).

The protein resides in the cell membrane. Its function is as follows. Part of the ABC transporter complex ArgTUV involved in L-arginine import. May also transport L-citrulline. Binds L-arginine and its molecular precursor L-citrulline, but not L-histidine, L-glutamate, L-glutamine, L-lysine or L-cysteine. The polypeptide is Arginine-binding protein ArgT (Corynebacterium glutamicum (strain ATCC 13032 / DSM 20300 / JCM 1318 / BCRC 11384 / CCUG 27702 / LMG 3730 / NBRC 12168 / NCIMB 10025 / NRRL B-2784 / 534)).